The sequence spans 383 residues: Glutaminyl-peptide cyclotransferase-like protein (383 aa).

The helical transmembrane segment at V33–W53 threads the bilayer. Residues C168 and C192 are joined by a disulfide bond. D187 serves as a coordination point for Zn(2+). The active-site Proton acceptor is E226. E227 provides a ligand contact to Zn(2+). The active-site Proton acceptor is D270. Position 352 (H352) interacts with Zn(2+).

It belongs to the glutaminyl-peptide cyclotransferase family. Detected in thalamus, hippocampus, brain cortex, cerebellum, kidney, lung and liver, and at low levels in heart and spleen.

It is found in the golgi apparatus membrane. The catalysed reaction is N-terminal L-glutaminyl-[peptide] = N-terminal 5-oxo-L-prolyl-[peptide] + NH4(+). Its function is as follows. Responsible for the biosynthesis of pyroglutamyl peptides. This Mus musculus (Mouse) protein is Glutaminyl-peptide cyclotransferase-like protein (Qpctl).